The following is a 229-amino-acid chain: 2,3-bisphosphoglycerate-dependent phosphoglycerate mutase (229 aa).

Residues 7 to 14 (RHGQSEWN), 20 to 21 (TG), R59, 86 to 89 (ERHY), K97, 113 to 114 (RR), and 182 to 183 (GN) contribute to the substrate site. Catalysis depends on H8, which acts as the Tele-phosphohistidine intermediate. The Proton donor/acceptor role is filled by E86.

The protein belongs to the phosphoglycerate mutase family. BPG-dependent PGAM subfamily.

It catalyses the reaction (2R)-2-phosphoglycerate = (2R)-3-phosphoglycerate. It functions in the pathway carbohydrate degradation; glycolysis; pyruvate from D-glyceraldehyde 3-phosphate: step 3/5. Catalyzes the interconversion of 2-phosphoglycerate and 3-phosphoglycerate. This is 2,3-bisphosphoglycerate-dependent phosphoglycerate mutase from Listeria monocytogenes serovar 1/2a (strain ATCC BAA-679 / EGD-e).